The primary structure comprises 173 residues: Translation initiation factor IF-3 (173 aa).

This sequence belongs to the IF-3 family. In terms of assembly, monomer.

It localises to the cytoplasm. In terms of biological role, IF-3 binds to the 30S ribosomal subunit and shifts the equilibrium between 70S ribosomes and their 50S and 30S subunits in favor of the free subunits, thus enhancing the availability of 30S subunits on which protein synthesis initiation begins. This chain is Translation initiation factor IF-3, found in Campylobacter lari (strain RM2100 / D67 / ATCC BAA-1060).